The sequence spans 561 residues: Oligo-1,6-glucosidase (561 aa).

The active-site Nucleophile is the Asp-199. Glu-256 serves as the catalytic Proton donor.

The protein belongs to the glycosyl hydrolase 13 family.

Its subcellular location is the cytoplasm. It carries out the reaction Hydrolysis of (1-&gt;6)-alpha-D-glucosidic linkages in some oligosaccharides produced from starch and glycogen by alpha-amylase, and in isomaltose.. The chain is Oligo-1,6-glucosidase (malL) from Halalkalibacterium halodurans (strain ATCC BAA-125 / DSM 18197 / FERM 7344 / JCM 9153 / C-125) (Bacillus halodurans).